The chain runs to 495 residues: Protein YhjJ (495 aa).

An N-terminal signal peptide occupies residues 1–24 (MQGTKIRLLAGSLLMLASAGYVQA).

It belongs to the peptidase M16 family.

It localises to the periplasm. The sequence is that of Protein YhjJ (yhjJ) from Salmonella typhi.